The primary structure comprises 236 residues: MKINILTLFPEMFDIFKHSIIGRARENGFLHIETVNIRDYTLNKHKKVDDYPYGGGAGMVMTPQPVVDAIKAVKEKNKGKVIFLGPRGKTFNQEMAKELSKEEELIFVCGHYEGIDQRVYKYFDLEISLGDFVLTGGEMACIPVIDSISRLVPGVLGSEESFQDESYYDGTLEYPQYTRPFEFEGEKVPEVLMSGHHENIRKWRRKQSLLITKERRPDMFEKIKLSKEDIKLLKSK.

S-adenosyl-L-methionine contacts are provided by residues G110 and 129-134; that span reads LGDFVL.

The protein belongs to the RNA methyltransferase TrmD family. Homodimer.

Its subcellular location is the cytoplasm. It carries out the reaction guanosine(37) in tRNA + S-adenosyl-L-methionine = N(1)-methylguanosine(37) in tRNA + S-adenosyl-L-homocysteine + H(+). In terms of biological role, specifically methylates guanosine-37 in various tRNAs. The polypeptide is tRNA (guanine-N(1)-)-methyltransferase (Clostridium perfringens (strain ATCC 13124 / DSM 756 / JCM 1290 / NCIMB 6125 / NCTC 8237 / Type A)).